The primary structure comprises 372 residues: Serine protease inhibitor 42Dd (372 aa).

Positions 1–15 are cleaved as a signal peptide; that stretch reads MYYLCIFLWVTSVAC. N-linked (GlcNAc...) asparagine glycans are attached at residues asparagine 197 and asparagine 232.

The protein belongs to the serpin family. As to expression, expressed in the ovary.

The protein resides in the secreted. Serine protease inhibitor with activity toward trypsin. Involved in innate immunity to fungal infection by negatively regulating the Toll signaling pathway and suppressing the expression of the antifungal peptide drosomycin. Acts upstream of SPE and grass, and downstream of the fungal cell wall pattern recognition receptor GNBP3. May function specifically in the GNBP3-dependent beta-1,3-glucan branch of the Toll pathway. The polypeptide is Serine protease inhibitor 42Dd (Drosophila melanogaster (Fruit fly)).